Here is a 119-residue protein sequence, read N- to C-terminus: Na(+)/H(+) antiporter subunit G (119 aa).

3 helical membrane-spanning segments follow: residues 7–29 (IISI…IIRF), 44–61 (TLGV…FFLV), and 66–88 (VGKL…MMMG).

Belongs to the CPA3 antiporters (TC 2.A.63) subunit G family. As to quaternary structure, forms a heterooligomeric complex that consists of seven subunits: MrpA, MrpB, MrpC, MrpD, MrpE, MrpF and MrpG.

The protein localises to the cell membrane. In terms of biological role, mnh complex is a Na(+)Li(+)/H(+) antiporter involved in Na(+) and/or Li(+) excretion and Na(+) resistance. Na(+)/H(+) antiport consumes a transmembrane electrical potential, and is thus inferred to be electrogenic. Does not transport K(+), Ca(2+) or Mg(2+). In Alkalihalophilus pseudofirmus (strain ATCC BAA-2126 / JCM 17055 / OF4) (Bacillus pseudofirmus), this protein is Na(+)/H(+) antiporter subunit G (mrpG).